Consider the following 550-residue polypeptide: Glutamine--tRNA ligase (550 aa).

A 'HIGH' region motif is present at residues 34–44 (PEPNGYLHLGH). ATP is bound by residues 35–37 (EPN) and 41–47 (HLGHAKS). L-glutamine-binding residues include Asp67 and Tyr212. Residues Thr231, 261 to 262 (RL), and 269 to 271 (LSK) contribute to the ATP site. Residues 268 to 272 (VLSKR) carry the 'KMSKS' region motif.

The protein belongs to the class-I aminoacyl-tRNA synthetase family. As to quaternary structure, monomer.

Its subcellular location is the cytoplasm. It carries out the reaction tRNA(Gln) + L-glutamine + ATP = L-glutaminyl-tRNA(Gln) + AMP + diphosphate. This chain is Glutamine--tRNA ligase, found in Buchnera aphidicola subsp. Baizongia pistaciae (strain Bp).